A 66-amino-acid polypeptide reads, in one-letter code: Large ribosomal subunit protein bL32 (66 aa).

The protein belongs to the bacterial ribosomal protein bL32 family.

This chain is Large ribosomal subunit protein bL32, found in Rickettsia bellii (strain OSU 85-389).